A 143-amino-acid polypeptide reads, in one-letter code: NADH-quinone oxidoreductase subunit A (143 aa).

The next 3 membrane-spanning stretches (helical) occupy residues G7 to L27, F63 to W83, and F93 to W113.

Belongs to the complex I subunit 3 family. In terms of assembly, NDH-1 is composed of 14 different subunits. Subunits NuoA, H, J, K, L, M, N constitute the membrane sector of the complex.

The protein localises to the cell inner membrane. The enzyme catalyses a quinone + NADH + 5 H(+)(in) = a quinol + NAD(+) + 4 H(+)(out). In terms of biological role, NDH-1 shuttles electrons from NADH, via FMN and iron-sulfur (Fe-S) centers, to quinones in the respiratory chain. The immediate electron acceptor for the enzyme in this species is believed to be a menaquinone. Couples the redox reaction to proton translocation (for every two electrons transferred, four hydrogen ions are translocated across the cytoplasmic membrane), and thus conserves the redox energy in a proton gradient. The chain is NADH-quinone oxidoreductase subunit A from Chlorobium limicola (strain DSM 245 / NBRC 103803 / 6330).